A 72-amino-acid polypeptide reads, in one-letter code: Small ribosomal subunit protein bS18c (72 aa).

This sequence belongs to the bacterial ribosomal protein bS18 family. As to quaternary structure, part of the 30S ribosomal subunit.

Its subcellular location is the plastid. The protein resides in the chloroplast. The chain is Small ribosomal subunit protein bS18c from Thalassiosira pseudonana (Marine diatom).